Reading from the N-terminus, the 360-residue chain is Alanine racemase (360 aa).

Lys-36 serves as the catalytic Proton acceptor; specific for D-alanine. At Lys-36 the chain carries N6-(pyridoxal phosphate)lysine. A substrate-binding site is contributed by Arg-132. The Proton acceptor; specific for L-alanine role is filled by Tyr-256. Met-304 is a substrate binding site.

It belongs to the alanine racemase family. Requires pyridoxal 5'-phosphate as cofactor.

The enzyme catalyses L-alanine = D-alanine. It participates in amino-acid biosynthesis; D-alanine biosynthesis; D-alanine from L-alanine: step 1/1. Catalyzes the interconversion of L-alanine and D-alanine. May also act on other amino acids. The protein is Alanine racemase (alr) of Haemophilus influenzae (strain ATCC 51907 / DSM 11121 / KW20 / Rd).